A 509-amino-acid chain; its full sequence is Acetyl-coenzyme A carboxylase carboxyl transferase subunit beta, chloroplastic (509 aa).

Residues 164-216 form a disordered region; sequence HGSVCDGESHNSSEGESSSRRTHTKGVDLTIRESSNENERESSNENERKSSND. 2 stretches are compositionally biased toward basic and acidic residues: residues 170–182 and 193–216; these read GESH…ESSS and TIRE…SSND. The region spanning 226 to 509 is the CoA carboxyltransferase N-terminal domain; the sequence is LWLQCENCYG…LNQNSNQVEC (284 aa). 4 residues coordinate Zn(2+): Cys230, Cys233, Cys249, and Cys252. A C4-type zinc finger spans residues 230–252; the sequence is CENCYGLNYKKFLKSKMNICEQC. The disordered stretch occupies residues 288–307; that stretch reads FDSEGEQEQEQEQEQEEEET.

The protein belongs to the AccD/PCCB family. As to quaternary structure, acetyl-CoA carboxylase is a heterohexamer composed of biotin carboxyl carrier protein, biotin carboxylase and 2 subunits each of ACCase subunit alpha and ACCase plastid-coded subunit beta (accD). Zn(2+) serves as cofactor.

The protein localises to the plastid. It is found in the chloroplast stroma. It carries out the reaction N(6)-carboxybiotinyl-L-lysyl-[protein] + acetyl-CoA = N(6)-biotinyl-L-lysyl-[protein] + malonyl-CoA. It functions in the pathway lipid metabolism; malonyl-CoA biosynthesis; malonyl-CoA from acetyl-CoA: step 1/1. Functionally, component of the acetyl coenzyme A carboxylase (ACC) complex. Biotin carboxylase (BC) catalyzes the carboxylation of biotin on its carrier protein (BCCP) and then the CO(2) group is transferred by the transcarboxylase to acetyl-CoA to form malonyl-CoA. The chain is Acetyl-coenzyme A carboxylase carboxyl transferase subunit beta, chloroplastic from Ipomoea purpurea (Common morning glory).